A 461-amino-acid chain; its full sequence is Coronin-1A (461 aa).

An N-acetylserine modification is found at serine 2. Position 2 is a phosphoserine; by PKC (serine 2). WD repeat units lie at residues 13–63 (HVFG…LVLP), 73–110 (NVPL…MVWE), 123–160 (PVIT…LVWD), 164–204 (GAAV…RVIE), 207–251 (KGTV…ALWD), 258–296 (PLSL…RYFE), and 302–349 (PFLH…EPIA). Residues 403-418 (ELRVNRGLDSARRRAT) show a composition bias toward basic and acidic residues. The segment at 403-434 (ELRVNRGLDSARRRATPEPSGTPSSDTVSRLE) is disordered. Serine 412 is modified (phosphoserine; by PKC). Position 418 is a phosphothreonine (threonine 418). Polar residues predominate over residues 421–430 (PSGTPSSDTV). Serine 422 carries the phosphoserine modification. Residues 424-461 (TPSSDTVSRLEEDVRNLNAIVQKLQERLDRLEETVQAK) adopt a coiled-coil conformation.

The protein belongs to the WD repeat coronin family. Binds actin. In terms of processing, phosphorylation at Ser-412 by PKC strongly down-regulates the association with actin. Polyubiquitinated by RNF128 with 'Lys-48'-linked chains, leading to proteasomal degradation. Expressed in spleen, lymph nodes, thymus, brain and at very lower levels in lung. Also expressed in cells of the lymphoid/myeloid lineage. Not expressed in Kuffper cells.

It is found in the cytoplasm. It localises to the cytoskeleton. The protein localises to the cell cortex. Its subcellular location is the cytoplasmic vesicle. The protein resides in the phagosome membrane. Functionally, may be a crucial component of the cytoskeleton of highly motile cells, functioning both in the invagination of large pieces of plasma membrane, as well as in forming protrusions of the plasma membrane involved in cell locomotion. In mycobacteria-infected cells, its retention on the phagosomal membrane prevents fusion between phagosomes and lysosomes. The polypeptide is Coronin-1A (Coro1a) (Mus musculus (Mouse)).